The sequence spans 293 residues: Ribosomal protein L11 methyltransferase (293 aa).

Positions 145, 166, 188, and 230 each coordinate S-adenosyl-L-methionine.

This sequence belongs to the methyltransferase superfamily. PrmA family.

Its subcellular location is the cytoplasm. The enzyme catalyses L-lysyl-[protein] + 3 S-adenosyl-L-methionine = N(6),N(6),N(6)-trimethyl-L-lysyl-[protein] + 3 S-adenosyl-L-homocysteine + 3 H(+). Functionally, methylates ribosomal protein L11. The chain is Ribosomal protein L11 methyltransferase from Salmonella dublin (strain CT_02021853).